Consider the following 806-residue polypeptide: MNSSPPFLLKISAPSTSPQADCPNNYSFPPESPSSCRKGFTPVLTLEVPVAPGKDFNDHLSCNAGLSPNAGNRFTNPPYSREPFSCLTISSPCLPRRIPTPPPPPPVLSSPPPPERCPFEPFSPLLGRLYRQEPAGSSSPCFDRFSLQGSPSPHQRNLCCNYIDSPESQRSCPPSPRLCYVTSPPLIHQAPRASPVTSPELTHITLETGPVISTPLMPGSQGNYSIISPLLTHRPLRPGLAISPPLAHRSVETRPLTPASISHRGPHCPSRRSYNDPPLSSASSPPSGNPYHDNPMPPNSCEPKPQLDVPLGKNGCGPPLSSQAGMSGSPISPQEGCIHYSHLCPDSQISAPRSPFCVINLPPESAGSPSSSLPQALQKPCVGSFLWEPGGNSYLLLTPGTIISGPSCTTGPPLPQCPNPSPYFPSPLNNQCVAPPQSPRGYNEPRPPTSAPPQMKSPKSPESRRNPYKCRSLDNTPHHTPPSHSKSHKTNTCPQPPSQSFGLFSPCMEPAITTTSNSCPKEPPPETAVLKTVAPTSCPHSSPCNPALPSRYPKSSPHVPPPVSPCNTHMYSVVPPTSHLSPLSSPLNQSIPLPQPAVLPCGTYSAPRGPPSHIKSVAPPCSTHIYSFIPLRTPFDPRCLPVVPRARFCPTTVPCGIHTYAVTSPVPLNNPSQIPYSCSLPPSKTSSTCSTSVSSTIVCSDYQSSDSQINHQNKSQSPNKNSSLHNQSKSPLRRGAFQSRSRSRSSSPLQSSTQDRNESTNMGVKHHKRSRKQSQSPADGKIESQSKSLQHRKSVGQIKSPHSKKK.

Disordered regions lie at residues 1-36 (MNSSPPFLLKISAPSTSPQADCPNNYSFPPESPSSC), 257-329 (TPAS…MSGS), 428-496 (LNNQ…CPQP), and 707-806 (SQIN…SKKK). Over residues 13–27 (APSTSPQADCPNNYS) the composition is skewed to polar residues. Residues 277-290 (PPLSSASSPPSGNP) show a composition bias toward low complexity. Residues 320-329 (LSSQAGMSGS) show a composition bias toward polar residues. The segment at 521–806 (KEPPPETAVL…QIKSPHSKKK (286 aa)) is interaction with CRISP2. 2 stretches are compositionally biased toward low complexity: residues 710–723 (NHQNKSQSPNKNSS) and 733–754 (RRGAFQSRSRSRSSSPLQSSTQ). The segment covering 773–788 (QSQSPADGKIESQSKS) has biased composition (polar residues).

Interacts with CRISP2. As to expression, isoforms 3 and 4 are expressed in testis (at protein level).

The protein localises to the cytoplasm. Its function is as follows. Plays a role during spermatogenesis. The protein is Sperm head and tail associated protein (Nsun4) of Mus musculus (Mouse).